Here is a 454-residue protein sequence, read N- to C-terminus: UDP-glycosyltransferase 79A2 (454 aa).

Residues Ser-269, 330–331, 348–356, and 370–373 each bind UDP-alpha-D-glucose; these read WV, HAGYGSVIE, and KVDQ.

Belongs to the UDP-glycosyltransferase family.

In terms of biological role, may glycosylate diterpenes or flavonols in leaves. The sequence is that of UDP-glycosyltransferase 79A2 from Stevia rebaudiana (Stevia).